Here is a 161-residue protein sequence, read N- to C-terminus: ATP synthase subunit b 1 (161 aa).

The chain crosses the membrane as a helical span at residues E5 to F25.

The protein belongs to the ATPase B chain family. As to quaternary structure, F-type ATPases have 2 components, F(1) - the catalytic core - and F(0) - the membrane proton channel. F(1) has five subunits: alpha(3), beta(3), gamma(1), delta(1), epsilon(1). F(0) has three main subunits: a(1), b(2) and c(10-14). The alpha and beta chains form an alternating ring which encloses part of the gamma chain. F(1) is attached to F(0) by a central stalk formed by the gamma and epsilon chains, while a peripheral stalk is formed by the delta and b chains.

It localises to the cell inner membrane. Functionally, f(1)F(0) ATP synthase produces ATP from ADP in the presence of a proton or sodium gradient. F-type ATPases consist of two structural domains, F(1) containing the extramembraneous catalytic core and F(0) containing the membrane proton channel, linked together by a central stalk and a peripheral stalk. During catalysis, ATP synthesis in the catalytic domain of F(1) is coupled via a rotary mechanism of the central stalk subunits to proton translocation. Its function is as follows. Component of the F(0) channel, it forms part of the peripheral stalk, linking F(1) to F(0). This is ATP synthase subunit b 1 from Methylobacterium sp. (strain 4-46).